The following is a 1359-amino-acid chain: NPC1-like intracellular cholesterol transporter 1 (1359 aa).

The first 21 residues, methionine 1–serine 21, serve as a signal peptide directing secretion. Residues glutamate 22–serine 284 are Extracellular-facing. 9 cysteine pairs are disulfide-bonded: cysteine 33–cysteine 90, cysteine 39–cysteine 57, cysteine 78–cysteine 125, cysteine 91–cysteine 129, cysteine 113–cysteine 254, cysteine 116–cysteine 172, cysteine 189–cysteine 197, cysteine 243–cysteine 259, and cysteine 256–cysteine 263. Asparagine 54 carries an N-linked (GlcNAc...) asparagine glycan. N-linked (GlcNAc...) asparagine glycans are attached at residues asparagine 132 and asparagine 138. Asparagine 244 carries N-linked (GlcNAc...) asparagine glycosylation. The helical transmembrane segment at leucine 285–phenylalanine 305 threads the bilayer. The Cytoplasmic segment spans residues arginine 306–tryptophan 351. Residues proline 352–phenylalanine 372 form a helical membrane-spanning segment. The Extracellular segment spans residues threonine 373–aspartate 632. N-linked (GlcNAc...) asparagine glycosylation is found at asparagine 416, asparagine 431, asparagine 464, asparagine 479, asparagine 497, and asparagine 506. A disulfide bond links cysteine 471 and cysteine 485. Cysteine 525 and cysteine 542 are oxidised to a cystine. The N-linked (GlcNAc...) asparagine glycan is linked to asparagine 626. Positions aspartate 632–leucine 797 constitute an SSD domain. The chain crosses the membrane as a helical span at residues leucine 633–serine 653. Residues tyrosine 654–alanine 666 are Cytoplasmic-facing. A helical transmembrane segment spans residues threonine 667–phenylalanine 687. Residues serine 688 to leucine 696 are Extracellular-facing. The chain crosses the membrane as a helical span at residues valine 697–phenylalanine 717. The Cytoplasmic segment spans residues valine 718–arginine 742. The chain crosses the membrane as a helical span at residues valine 743–leucine 763. Residues threonine 764–serine 776 are Extracellular-facing. Residues glycine 777–leucine 797 form a helical membrane-spanning segment. The Cytoplasmic portion of the chain corresponds to aspartate 798–arginine 846. The helical transmembrane segment at glycine 847–isoleucine 867 threads the bilayer. The Extracellular portion of the chain corresponds to serine 868–glycine 1139. Cystine bridges form between cysteine 920/cysteine 925, cysteine 966/cysteine 1024, and cysteine 980/cysteine 989. The helical transmembrane segment at leucine 1140–leucine 1160 threads the bilayer. Residues aspartate 1161 to asparagine 1168 are Cytoplasmic-facing. Residues leucine 1169–serine 1189 traverse the membrane as a helical segment. Topologically, residues tyrosine 1190–asparagine 1191 are extracellular. A helical transmembrane segment spans residues alanine 1192–isoleucine 1212. Residues threonine 1213 to glycine 1236 are Cytoplasmic-facing. A helical transmembrane segment spans residues serine 1237 to alanine 1257. Residues lysine 1258 to arginine 1268 are Extracellular-facing. Residues leucine 1269–leucine 1289 traverse the membrane as a helical segment. Topologically, residues serine 1290 to phenylalanine 1359 are cytoplasmic.

The protein belongs to the patched family. As to quaternary structure, interacts with RAB11A, MYO5B and RAB11FIP2. Interaction with RAB11A, MYO5B and RAB11FIP2 is required for proper transport to the plasma membrane upon cholesterol depletion. Interacts with NPC2. Interacts with LIMA1. Highly glycosylated. As to expression, widely expressed. Expressed in liver. Also expressed in small intestine, pancreas, kidney, lung, pancreas, spleen, heart, gall bladder, brain, testis, stomach and muscle.

It is found in the apical cell membrane. The protein localises to the cell membrane. Its subcellular location is the cytoplasmic vesicle membrane. The enzyme catalyses cholesterol(in) = cholesterol(out). It catalyses the reaction sitosterol(out) = sitosterol(in). Functionally, plays a major role in cholesterol homeostasis. Critical for the uptake of cholesterol across the plasma membrane of the intestinal enterocyte. Involved in plant sterol absorption, it transports sitosterol, although at lower rates than cholesterol. Is the direct molecular target of ezetimibe, a drug that inhibits cholesterol absorption and is approved for the treatment of hypercholesterolemia. May have a function in the transport of multiple lipids and their homeostasis, thereby influencing lipid metabolism regulation. May be involved in caveolin trafficking from the plasma membrane. In addition, acts as a negative regulator of NPC2 and down-regulates its expression and secretion by inhibiting its maturation and accelerating its degradation. This Homo sapiens (Human) protein is NPC1-like intracellular cholesterol transporter 1.